An 80-amino-acid chain; its full sequence is Cytochrome c oxidase subunit 7B, mitochondrial (80 aa).

Residues 1 to 24 (MFPLVKNALNRLQVRSIQQTMARQ) constitute a mitochondrion transit peptide. The Mitochondrial matrix portion of the chain corresponds to 25-32 (SHQKRTPD). The chain crosses the membrane as a helical span at residues 33-59 (FHDKYGNAVLASGATFCIVTWTYVATQ). The Mitochondrial intermembrane segment spans residues 60–80 (VGIEWNLSPVGRVTPKEWRNQ).

It belongs to the cytochrome c oxidase VIIb family. In terms of assembly, component of the cytochrome c oxidase (complex IV, CIV), a multisubunit enzyme composed of 14 subunits. The complex is composed of a catalytic core of 3 subunits MT-CO1, MT-CO2 and MT-CO3, encoded in the mitochondrial DNA, and 11 supernumerary subunits COX4I, COX5A, COX5B, COX6A, COX6B, COX6C, COX7A, COX7B, COX7C, COX8 and NDUFA4, which are encoded in the nuclear genome. The complex exists as a monomer or a dimer and forms supercomplexes (SCs) in the inner mitochondrial membrane with NADH-ubiquinone oxidoreductase (complex I, CI) and ubiquinol-cytochrome c oxidoreductase (cytochrome b-c1 complex, complex III, CIII), resulting in different assemblies (supercomplex SCI(1)III(2)IV(1) and megacomplex MCI(2)III(2)IV(2)).

Its subcellular location is the mitochondrion inner membrane. Its pathway is energy metabolism; oxidative phosphorylation. Component of the cytochrome c oxidase, the last enzyme in the mitochondrial electron transport chain which drives oxidative phosphorylation. The respiratory chain contains 3 multisubunit complexes succinate dehydrogenase (complex II, CII), ubiquinol-cytochrome c oxidoreductase (cytochrome b-c1 complex, complex III, CIII) and cytochrome c oxidase (complex IV, CIV), that cooperate to transfer electrons derived from NADH and succinate to molecular oxygen, creating an electrochemical gradient over the inner membrane that drives transmembrane transport and the ATP synthase. Cytochrome c oxidase is the component of the respiratory chain that catalyzes the reduction of oxygen to water. Electrons originating from reduced cytochrome c in the intermembrane space (IMS) are transferred via the dinuclear copper A center (CU(A)) of subunit 2 and heme A of subunit 1 to the active site in subunit 1, a binuclear center (BNC) formed by heme A3 and copper B (CU(B)). The BNC reduces molecular oxygen to 2 water molecules using 4 electrons from cytochrome c in the IMS and 4 protons from the mitochondrial matrix. Plays a role in proper central nervous system (CNS) development in vertebrates. This chain is Cytochrome c oxidase subunit 7B, mitochondrial (COX7B), found in Pongo abelii (Sumatran orangutan).